The sequence spans 82 residues: Exodeoxyribonuclease 7 small subunit (82 aa).

The protein belongs to the XseB family. Heterooligomer composed of large and small subunits.

It is found in the cytoplasm. The catalysed reaction is Exonucleolytic cleavage in either 5'- to 3'- or 3'- to 5'-direction to yield nucleoside 5'-phosphates.. Its function is as follows. Bidirectionally degrades single-stranded DNA into large acid-insoluble oligonucleotides, which are then degraded further into small acid-soluble oligonucleotides. This is Exodeoxyribonuclease 7 small subunit from Mannheimia succiniciproducens (strain KCTC 0769BP / MBEL55E).